The following is a 212-amino-acid chain: Protein-L-isoaspartate O-methyltransferase (212 aa).

Residue Ser-60 is part of the active site.

The protein belongs to the methyltransferase superfamily. L-isoaspartyl/D-aspartyl protein methyltransferase family.

It is found in the cytoplasm. The enzyme catalyses [protein]-L-isoaspartate + S-adenosyl-L-methionine = [protein]-L-isoaspartate alpha-methyl ester + S-adenosyl-L-homocysteine. In terms of biological role, catalyzes the methyl esterification of L-isoaspartyl residues in peptides and proteins that result from spontaneous decomposition of normal L-aspartyl and L-asparaginyl residues. It plays a role in the repair and/or degradation of damaged proteins. The sequence is that of Protein-L-isoaspartate O-methyltransferase from Pseudomonas putida (strain W619).